The primary structure comprises 181 residues: MSSVIASRRYAYALLSAADEGGFLDDVTAEMEMIGETLAGSRDLVRVLASPLINGDRKTHILEEIFRGRVGERMMRFLSLIARKKRAGILRGIASEFKVLLDEKNGVVNADVTSATELSGEQAKELVNGLAAYTGKHVRARMTLDPEMIGGVSVQIGDTILDGSIRHQLQVLRRTLSVEEA.

Belongs to the ATPase delta chain family. F-type ATPases have 2 components, F(1) - the catalytic core - and F(0) - the membrane proton channel. F(1) has five subunits: alpha(3), beta(3), gamma(1), delta(1), epsilon(1). F(0) has three main subunits: a(1), b(2) and c(10-14). The alpha and beta chains form an alternating ring which encloses part of the gamma chain. F(1) is attached to F(0) by a central stalk formed by the gamma and epsilon chains, while a peripheral stalk is formed by the delta and b chains.

It localises to the cell inner membrane. In terms of biological role, f(1)F(0) ATP synthase produces ATP from ADP in the presence of a proton or sodium gradient. F-type ATPases consist of two structural domains, F(1) containing the extramembraneous catalytic core and F(0) containing the membrane proton channel, linked together by a central stalk and a peripheral stalk. During catalysis, ATP synthesis in the catalytic domain of F(1) is coupled via a rotary mechanism of the central stalk subunits to proton translocation. Functionally, this protein is part of the stalk that links CF(0) to CF(1). It either transmits conformational changes from CF(0) to CF(1) or is implicated in proton conduction. This is ATP synthase subunit delta from Chlorobium luteolum (strain DSM 273 / BCRC 81028 / 2530) (Pelodictyon luteolum).